The chain runs to 273 residues: Dermonecrotic toxin LhSicTox-alphaIA2avii (273 aa).

H5 is a catalytic residue. Residues E25 and D27 each coordinate Mg(2+). H41 serves as the catalytic Nucleophile. Intrachain disulfides connect C45/C51 and C47/C190. D85 is a Mg(2+) binding site.

Belongs to the arthropod phospholipase D family. Class II subfamily. Mg(2+) is required as a cofactor. As to expression, expressed by the venom gland.

The protein localises to the secreted. It carries out the reaction an N-(acyl)-sphingosylphosphocholine = an N-(acyl)-sphingosyl-1,3-cyclic phosphate + choline. It catalyses the reaction an N-(acyl)-sphingosylphosphoethanolamine = an N-(acyl)-sphingosyl-1,3-cyclic phosphate + ethanolamine. The enzyme catalyses a 1-acyl-sn-glycero-3-phosphocholine = a 1-acyl-sn-glycero-2,3-cyclic phosphate + choline. The catalysed reaction is a 1-acyl-sn-glycero-3-phosphoethanolamine = a 1-acyl-sn-glycero-2,3-cyclic phosphate + ethanolamine. Its function is as follows. Dermonecrotic toxins cleave the phosphodiester linkage between the phosphate and headgroup of certain phospholipids (sphingolipid and lysolipid substrates), forming an alcohol (often choline) and a cyclic phosphate. This toxin acts on sphingomyelin (SM). It may also act on ceramide phosphoethanolamine (CPE), lysophosphatidylcholine (LPC) and lysophosphatidylethanolamine (LPE), but not on lysophosphatidylserine (LPS), and lysophosphatidylglycerol (LPG). It acts by transphosphatidylation, releasing exclusively cyclic phosphate products as second products. Induces dermonecrosis, hemolysis, increased vascular permeability, edema, inflammatory response, and platelet aggregation. In Loxosceles hirsuta (Recluse spider), this protein is Dermonecrotic toxin LhSicTox-alphaIA2avii.